The primary structure comprises 220 residues: MKTDFWLQRWSAGQIGFHQSEVNQDLQQYWSSLSVAPGARVLVPLCGKSQDMSWLRGQGYHVVGAELSEAAVESYFTERGEQPQITSQGDFKVYAAPGIEIWCGDFFALTVRDIGHCAAFYDRAAMIALPADMRERYVRQLEALMPQACSGLLITLEYDQTLLEGPPFSVPRTWLQRVMSGNWEVTKVGGQDTLHSSPKALKAGLERMDEHVYVLERQSR.

S-adenosyl-L-methionine contacts are provided by Trp10, Leu45, Glu66, and Arg123.

Belongs to the class I-like SAM-binding methyltransferase superfamily. TPMT family.

The protein resides in the cytoplasm. It carries out the reaction S-adenosyl-L-methionine + a thiopurine = S-adenosyl-L-homocysteine + a thiopurine S-methylether.. The polypeptide is Thiopurine S-methyltransferase (Pseudomonas syringae pv. syringae (strain B728a)).